Reading from the N-terminus, the 376-residue chain is Alcohol dehydrogenase class-3 (376 aa).

Residues Cys-47, His-69, Cys-99, Cys-102, Cys-105, Cys-113, and Cys-176 each contribute to the Zn(2+) site.

The protein belongs to the zinc-containing alcohol dehydrogenase family. Class-III subfamily. Homodimer. Zn(2+) serves as cofactor. In terms of tissue distribution, expressed in the skeletal muscle, heart, gill filaments and liver, with highest levels in the kidney.

It localises to the cytoplasm. The catalysed reaction is a primary alcohol + NAD(+) = an aldehyde + NADH + H(+). It carries out the reaction a secondary alcohol + NAD(+) = a ketone + NADH + H(+). The enzyme catalyses S-(hydroxymethyl)glutathione + NADP(+) = S-formylglutathione + NADPH + H(+). It catalyses the reaction S-(hydroxymethyl)glutathione + NAD(+) = S-formylglutathione + NADH + H(+). The catalysed reaction is S-nitrosoglutathione + NADH + H(+) = S-(hydroxysulfenamide)glutathione + NAD(+). Class-III ADH is remarkably ineffective in oxidizing ethanol, but it readily catalyzes the oxidation of long-chain primary alcohols and the oxidation of S-(hydroxymethyl) glutathione. Also acts as a S-nitroso-glutathione reductase by catalyzing the NADH-dependent reduction of S-nitrosoglutathione, thereby regulating protein S-nitrosylation. This Sparus aurata (Gilthead sea bream) protein is Alcohol dehydrogenase class-3.